Consider the following 401-residue polypeptide: Probable N-acetyl-gamma-glutamyl-phosphate reductase, chloroplastic (401 aa).

The N-terminal 48 residues, 1–48 (MSTASAFSSIQGCWFKGERKIRVADKRAKRLTLGSHVASPSSMSFRVS), are a transit peptide targeting the chloroplast. Cys-205 is an active-site residue.

It belongs to the NAGSA dehydrogenase family. Type 1 subfamily. Homotetramer.

Its subcellular location is the plastid. The protein localises to the chloroplast. The enzyme catalyses N-acetyl-L-glutamate 5-semialdehyde + phosphate + NADP(+) = N-acetyl-L-glutamyl 5-phosphate + NADPH + H(+). The protein operates within amino-acid biosynthesis; L-arginine biosynthesis; N(2)-acetyl-L-ornithine from L-glutamate: step 3/4. The protein is Probable N-acetyl-gamma-glutamyl-phosphate reductase, chloroplastic of Arabidopsis thaliana (Mouse-ear cress).